The sequence spans 459 residues: Precorrin-3B synthase (459 aa).

[4Fe-4S] cluster is bound by residues Cys-338, Cys-344, Cys-377, and Cys-381. Cys-381 is a siroheme binding site.

The protein belongs to the nitrite and sulfite reductase 4Fe-4S domain family.

The enzyme catalyses precorrin-3A + NADH + O2 + 2 H(+) = precorrin-3B + NAD(+) + H2O. It functions in the pathway cofactor biosynthesis; adenosylcobalamin biosynthesis; cob(II)yrinate a,c-diamide from precorrin-2 (aerobic route): step 2/10. In terms of biological role, catalyzes the elimination of C-20 in precorrin-3A to form precorrin-3B. The sequence is that of Precorrin-3B synthase (cobG) from Sinorhizobium sp.